We begin with the raw amino-acid sequence, 63 residues long: Large ribosomal subunit protein eL29 (63 aa).

Over residues methionine 1–threonine 26 the composition is skewed to basic residues. Positions methionine 1–valine 35 are disordered.

It belongs to the eukaryotic ribosomal protein eL29 family. Component of the large ribosomal subunit. Mature ribosomes consist of a small (40S) and a large (60S) subunit. The 40S subunit contains about 32 different proteins and 1 molecule of RNA (18S). The 60S subunit contains 45 different proteins and 3 molecules of RNA (25S, 5.8S and 5S).

It localises to the cytoplasm. In terms of biological role, component of the ribosome, a large ribonucleoprotein complex responsible for the synthesis of proteins in the cell. The small ribosomal subunit (SSU) binds messenger RNAs (mRNAs) and translates the encoded message by selecting cognate aminoacyl-transfer RNA (tRNA) molecules. The large subunit (LSU) contains the ribosomal catalytic site termed the peptidyl transferase center (PTC), which catalyzes the formation of peptide bonds, thereby polymerizing the amino acids delivered by tRNAs into a polypeptide chain. The nascent polypeptides leave the ribosome through a tunnel in the LSU and interact with protein factors that function in enzymatic processing, targeting, and the membrane insertion of nascent chains at the exit of the ribosomal tunnel. In Candida albicans (strain SC5314 / ATCC MYA-2876) (Yeast), this protein is Large ribosomal subunit protein eL29.